The following is a 630-amino-acid chain: Cyclin-T1-2 (630 aa).

Residues 288-297 are compositionally biased toward low complexity; sequence QSSLSVSSSS. Disordered regions lie at residues 288–313 and 410–439; these read QSSL…DSSQ and RSGD…VEPP. Polar residues predominate over residues 421-439; the sequence is GGSSLTDVDSKSTQSVEPP.

The protein belongs to the cyclin family. Cyclin T subfamily.

The chain is Cyclin-T1-2 (CYCT1_2) from Oryza sativa subsp. japonica (Rice).